A 380-amino-acid polypeptide reads, in one-letter code: Ribosomal RNA large subunit methyltransferase F (380 aa).

The tract at residues methionine 1 to lysine 32 is disordered.

Belongs to the methyltransferase superfamily. METTL16/RlmF family.

It localises to the cytoplasm. It catalyses the reaction adenosine(1618) in 23S rRNA + S-adenosyl-L-methionine = N(6)-methyladenosine(1618) in 23S rRNA + S-adenosyl-L-homocysteine + H(+). Functionally, specifically methylates the adenine in position 1618 of 23S rRNA. This Shewanella halifaxensis (strain HAW-EB4) protein is Ribosomal RNA large subunit methyltransferase F.